The following is a 266-amino-acid chain: Undecaprenyl-diphosphatase (266 aa).

A run of 8 helical transmembrane segments spans residues 1-21, 39-59, 87-107, 111-131, 149-169, 183-203, 218-238, and 246-266; these read MDTF…FLPI, QGLS…VIYF, WWII…KDFI, LRSA…LWWA, ALLI…RSGA, AAAR…AILV, ALTL…HYFL, and MTPF…FIFL.

Belongs to the UppP family.

It localises to the cell inner membrane. The catalysed reaction is di-trans,octa-cis-undecaprenyl diphosphate + H2O = di-trans,octa-cis-undecaprenyl phosphate + phosphate + H(+). In terms of biological role, catalyzes the dephosphorylation of undecaprenyl diphosphate (UPP). Confers resistance to bacitracin. This is Undecaprenyl-diphosphatase from Shewanella sp. (strain MR-4).